The primary structure comprises 869 residues: Probable beta-glucosidase F (869 aa).

The first 19 residues, 1-19, serve as a signal peptide directing secretion; that stretch reads MRVLSAIALVASLASSALS. 2 N-linked (GlcNAc...) asparagine glycosylation sites follow: asparagine 77 and asparagine 261. Aspartate 289 is an active-site residue. 4 N-linked (GlcNAc...) asparagine glycosylation sites follow: asparagine 332, asparagine 364, asparagine 399, and asparagine 478. Residues 677–697 are disordered; it reads STYPPTRPPKGPTPTYPTAIP. Pro residues predominate over residues 681–691; it reads PTRPPKGPTPT. A glycan (N-linked (GlcNAc...) asparagine) is linked at asparagine 728.

Belongs to the glycosyl hydrolase 3 family.

The protein resides in the secreted. The enzyme catalyses Hydrolysis of terminal, non-reducing beta-D-glucosyl residues with release of beta-D-glucose.. Its pathway is glycan metabolism; cellulose degradation. Its function is as follows. Beta-glucosidases are one of a number of cellulolytic enzymes involved in the degradation of cellulosic biomass. Catalyzes the last step releasing glucose from the inhibitory cellobiose. This Aspergillus fumigatus (strain ATCC MYA-4609 / CBS 101355 / FGSC A1100 / Af293) (Neosartorya fumigata) protein is Probable beta-glucosidase F (bglF).